The primary structure comprises 325 residues: NADH-quinone oxidoreductase subunit H (325 aa).

The next 8 helical transmembrane spans lie at 11–31 (ILLT…CGAF), 81–101 (VIFT…FAIV), 114–134 (IGIL…LFAG), 154–174 (LSYE…AGSF), 186–206 (VWNV…GVAV), 237–257 (FFVG…TLFF), 265–285 (LPPF…FILI), and 304–324 (ICLP…LWQA).

The protein belongs to the complex I subunit 1 family. NDH-1 is composed of 13 different subunits. Subunits NuoA, H, J, K, L, M, N constitute the membrane sector of the complex.

The protein resides in the cell inner membrane. It catalyses the reaction a quinone + NADH + 5 H(+)(in) = a quinol + NAD(+) + 4 H(+)(out). Its function is as follows. NDH-1 shuttles electrons from NADH, via FMN and iron-sulfur (Fe-S) centers, to quinones in the respiratory chain. The immediate electron acceptor for the enzyme in this species is believed to be ubiquinone. Couples the redox reaction to proton translocation (for every two electrons transferred, four hydrogen ions are translocated across the cytoplasmic membrane), and thus conserves the redox energy in a proton gradient. This subunit may bind ubiquinone. In Escherichia coli O7:K1 (strain IAI39 / ExPEC), this protein is NADH-quinone oxidoreductase subunit H.